A 434-amino-acid polypeptide reads, in one-letter code: Arrestin domain-containing protein 1 (434 aa).

Residues 295-345 are disordered; it reads PGPGSSPGLLSPVVPSAPPQEEAEAVASGPHFSDPVSLSTKSHSQQQPLST. Polar residues predominate over residues 330–342; the sequence is VSLSTKSHSQQQP. 2 consecutive short sequence motifs (PPxY motif) follow at residues 401–404 and 414–417; these read PPEY and PPSY.

The protein belongs to the arrestin family. As to quaternary structure, interacts (via PPxY motifs) with ITCH (via WW domains); the interaction is direct and participates in the recruitment of the ubiquitin-protein ligase ITCH to the NOTCH1 receptor. Interacts with ARRB1 and ARRB2; the interaction is direct. Interacts with TSG101; may recruit TSG101 to the plasma membrane. Interacts (via PPxY motifs) with WWP2 (via WW domains); ubiquitinates ARRDC1. Interacts with SLC11A2; controls the incorporation of SLC11A2 into extracellular vesicles through an ubiquitination-dependent mechanism. Interacts with WWP1 (via WW domains). Interacts with NEDD4 (via WW domains). Interacts with PDCD6IP. Ubiquitinated. Ubiquitination by WWP2; promotes localization to extracellular microvesicles. Ubiquitinated by WWP1.

Its subcellular location is the cell membrane. Its function is as follows. Functions as an adapter recruiting ubiquitin-protein ligases to their specific substrates. Through an ubiquitination-dependent mechanism plays for instance a role in the incorporation of SLC11A2 into extracellular vesicles. More generally, plays a role in the extracellular transport of proteins between cells through the release in the extracellular space of microvesicles. By participating in the ITCH-mediated ubiquitination and subsequent degradation of NOTCH1, negatively regulates the NOTCH signaling pathway. The protein is Arrestin domain-containing protein 1 of Rattus norvegicus (Rat).